A 502-amino-acid chain; its full sequence is Maturase K (502 aa).

The protein belongs to the intron maturase 2 family. MatK subfamily.

The protein resides in the plastid. The protein localises to the chloroplast. Its function is as follows. Usually encoded in the trnK tRNA gene intron. Probably assists in splicing its own and other chloroplast group II introns. This chain is Maturase K, found in Ehretia anacua (Sandpaper tree).